A 136-amino-acid polypeptide reads, in one-letter code: Small ribosomal subunit protein bS16 (136 aa).

The segment covering 113–122 (LALKSHRRSA) has biased composition (basic residues). The disordered stretch occupies residues 113–136 (LALKSHRRSAKKEAEAKAATGGEA).

It belongs to the bacterial ribosomal protein bS16 family.

This is Small ribosomal subunit protein bS16 from Pelodictyon phaeoclathratiforme (strain DSM 5477 / BU-1).